A 349-amino-acid chain; its full sequence is UDP-3-O-acylglucosamine N-acyltransferase (349 aa).

His246 functions as the Proton acceptor in the catalytic mechanism.

The protein belongs to the transferase hexapeptide repeat family. LpxD subfamily. In terms of assembly, homotrimer.

The enzyme catalyses a UDP-3-O-[(3R)-3-hydroxyacyl]-alpha-D-glucosamine + a (3R)-hydroxyacyl-[ACP] = a UDP-2-N,3-O-bis[(3R)-3-hydroxyacyl]-alpha-D-glucosamine + holo-[ACP] + H(+). It functions in the pathway bacterial outer membrane biogenesis; LPS lipid A biosynthesis. In terms of biological role, catalyzes the N-acylation of UDP-3-O-acylglucosamine using 3-hydroxyacyl-ACP as the acyl donor. Is involved in the biosynthesis of lipid A, a phosphorylated glycolipid that anchors the lipopolysaccharide to the outer membrane of the cell. This is UDP-3-O-acylglucosamine N-acyltransferase from Nostoc sp. (strain PCC 7120 / SAG 25.82 / UTEX 2576).